Here is a 183-residue protein sequence, read N- to C-terminus: uncharacterized protein (183 aa).

A Glycyl lysine isopeptide (Lys-Gly) (interchain with G-Cter in ubiquitin) cross-link involves residue Lys-21. 2 disordered regions span residues 24–111 (NTTT…QNDN) and 160–183 (PQSILDRSRTLPPSNASNTTTRRP). Residues 99–108 (QQQQQQQQQQ) show a composition bias toward low complexity. The segment covering 170-183 (LPPSNASNTTTRRP) has biased composition (polar residues).

The protein localises to the cytoplasm. This is an uncharacterized protein from Saccharomyces cerevisiae (strain ATCC 204508 / S288c) (Baker's yeast).